The sequence spans 466 residues: 3-isopropylmalate dehydratase large subunit (466 aa).

The [4Fe-4S] cluster site is built by C347, C407, and C410.

The protein belongs to the aconitase/IPM isomerase family. LeuC type 1 subfamily. Heterodimer of LeuC and LeuD. [4Fe-4S] cluster is required as a cofactor.

The catalysed reaction is (2R,3S)-3-isopropylmalate = (2S)-2-isopropylmalate. It participates in amino-acid biosynthesis; L-leucine biosynthesis; L-leucine from 3-methyl-2-oxobutanoate: step 2/4. In terms of biological role, catalyzes the isomerization between 2-isopropylmalate and 3-isopropylmalate, via the formation of 2-isopropylmaleate. In Shewanella woodyi (strain ATCC 51908 / MS32), this protein is 3-isopropylmalate dehydratase large subunit.